The sequence spans 382 residues: Anhydro-N-acetylmuramic acid kinase (382 aa).

An ATP-binding site is contributed by 22-29; sequence GTSMDGVD.

It belongs to the anhydro-N-acetylmuramic acid kinase family.

The catalysed reaction is 1,6-anhydro-N-acetyl-beta-muramate + ATP + H2O = N-acetyl-D-muramate 6-phosphate + ADP + H(+). The protein operates within amino-sugar metabolism; 1,6-anhydro-N-acetylmuramate degradation. It functions in the pathway cell wall biogenesis; peptidoglycan recycling. Functionally, catalyzes the specific phosphorylation of 1,6-anhydro-N-acetylmuramic acid (anhMurNAc) with the simultaneous cleavage of the 1,6-anhydro ring, generating MurNAc-6-P. Is required for the utilization of anhMurNAc either imported from the medium or derived from its own cell wall murein, and thus plays a role in cell wall recycling. The protein is Anhydro-N-acetylmuramic acid kinase of Burkholderia orbicola (strain AU 1054).